Here is a 420-residue protein sequence, read N- to C-terminus: Serine hydroxymethyltransferase (420 aa).

Residues leucine 123 and glycine 127 to leucine 129 contribute to the (6S)-5,6,7,8-tetrahydrofolate site. Lysine 232 carries the N6-(pyridoxal phosphate)lysine modification. Serine 357 to phenylalanine 359 is a binding site for (6S)-5,6,7,8-tetrahydrofolate.

This sequence belongs to the SHMT family. As to quaternary structure, homodimer. It depends on pyridoxal 5'-phosphate as a cofactor.

Its subcellular location is the cytoplasm. The enzyme catalyses (6R)-5,10-methylene-5,6,7,8-tetrahydrofolate + glycine + H2O = (6S)-5,6,7,8-tetrahydrofolate + L-serine. It functions in the pathway one-carbon metabolism; tetrahydrofolate interconversion. It participates in amino-acid biosynthesis; glycine biosynthesis; glycine from L-serine: step 1/1. In terms of biological role, catalyzes the reversible interconversion of serine and glycine with tetrahydrofolate (THF) serving as the one-carbon carrier. This reaction serves as the major source of one-carbon groups required for the biosynthesis of purines, thymidylate, methionine, and other important biomolecules. Also exhibits THF-independent aldolase activity toward beta-hydroxyamino acids, producing glycine and aldehydes, via a retro-aldol mechanism. The polypeptide is Serine hydroxymethyltransferase (Streptococcus pyogenes serotype M2 (strain MGAS10270)).